Here is a 903-residue protein sequence, read N- to C-terminus: MAERPARRAPPARALLLALAGALLAPRAARGMSLWDQRGTYEVARASLLSKDPGIPGQSIPAKDHPDVLTVQLQLESRDLILSLERNEGLIANGFTETHYLQDGTDVSLTRNHTDHCYYHGHVQGDAASVVSLSTCSGLRGLIMFENKTYSLEPMKNTTDSYKLVPAESMTNIQGLCGSQHNKSNLTMEDVSPGTSQMRARRHKRETLKMTKYVELVIVADNREFQRQGKDLEKVKQRLIEIANHVDKFYRPLNIRIVLVGVEVWNDIDKCSISQDPFTSLHEFLDWRKIKLLPRKSHDNAQLISGVYFQGTTIGMAPIMSMCTAEQSGGVVMDHSDSPLGAAVTLAHELGHNFGMNHDTLERGCSCRMAAEKGGCIMNPSTGFPFPMVFSSCSRKDLEASLEKGMGMCLFNLPEVKQAFGGRKCGNGYVEEGEECDCGEPEECTNRCCNATTCTLKPDAVCAHGQCCEDCQLKPPGTACRGSSNSCDLPEFCTGTAPHCPANVYLHDGHPCQGVDGYCYNGICQTHEQQCVTLWGPGAKPAPGICFERVNSAGDPYGNCGKDSKSAFAKCELRDAKCGKIQCQGGASRPVIGTNAVSIETNIPQQEGGRILCRGTHVYLGDDMPDPGLVLAGTKCAEGKICLNRRCQNISVFGVHKCAMQCHGRGVCNNRKNCHCEAHWAPPFCDKFGFGGSTDSGPIRQADNQGLTVGILVSILCLLAAGFVVYLKRKTLMRLLFTHKKTTMEKLRCVHPSRTPSGPHLGQAHHTPGKGLLMNRAPHFNTPKDRHSLKCQNMDISRPLDARAVPQLQSPQRVLLPLHQTPRAPSGPARPLPASPAVRQAQGIRKPSPPQKPLPADPLSRTSRLTSALVRTPGQQEPGHRPAPIRPAPKHQVPRPSHNAYIK.

The signal sequence occupies residues 1–31; the sequence is MAERPARRAPPARALLLALAGALLAPRAARG. Residues 32–205 constitute a propeptide that is removed on maturation; the sequence is MSLWDQRGTY…SQMRARRHKR (174 aa). Residues Asn-112, Asn-147, and Asn-157 are each glycosylated (N-linked (GlcNAc...) asparagine). The short motif at 175 to 182 is the Cysteine switch element; it reads GLCGSQHN. Residue Cys-177 coordinates Zn(2+). N-linked (GlcNAc...) asparagine glycosylation is found at Asn-182 and Asn-185. The Extracellular segment spans residues 206–706; sequence ETLKMTKYVE…GPIRQADNQG (501 aa). Residues 212–414 form the Peptidase M12B domain; it reads KYVELVIVAD…GMGMCLFNLP (203 aa). Cystine bridges form between Cys-323-Cys-409, Cys-365-Cys-393, and Cys-367-Cys-376. His-348 lines the Zn(2+) pocket. Residue Glu-349 is part of the active site. 2 residues coordinate Zn(2+): His-352 and His-358. Positions 422 to 508 constitute a Disintegrin domain; that stretch reads GRKCGNGYVE…HCPANVYLHD (87 aa). Residue Asn-450 is glycosylated (N-linked (GlcNAc...) asparagine). Cys-480 and Cys-500 are oxidised to a cystine. N-linked (GlcNAc...) asparagine glycosylation occurs at Asn-649. One can recognise an EGF-like domain in the interval 654-686; the sequence is GVHKCAMQCHGRGVCNNRKNCHCEAHWAPPFCD. 3 disulfide bridges follow: Cys-658–Cys-668, Cys-662–Cys-674, and Cys-676–Cys-685. Residues 707-727 traverse the membrane as a helical segment; sequence LTVGILVSILCLLAAGFVVYL. The Cytoplasmic portion of the chain corresponds to 728–903; that stretch reads KRKTLMRLLF…PRPSHNAYIK (176 aa). 2 disordered regions span residues 753–790 and 819–903; these read SRTP…HSLK and HQTP…AYIK. 2 consecutive short sequence motifs (SH3-binding; class II) follow at residues 824 to 830 and 846 to 852; these read APSGPAR and KPSPPQK. Short sequence motifs (SH3-binding; class I) lie at residues 830 to 837, 852 to 858, and 881 to 887; these read RPLPASPA, KPLPADP, and RPAPIRP. Over residues 847 to 856 the composition is skewed to pro residues; that stretch reads PSPPQKPLPA. Tyr-901 is subject to Phosphotyrosine; by SRC.

As to quaternary structure, interacts with alpha-actinin-2 and with syndecans. Interacts with SH3PXD2A. Interacts with FST3. Interacts with RACK1; the interaction is required for PKC-dependent translocation of ADAM12 to the cell membrane. It depends on Zn(2+) as a cofactor. The precursor is cleaved by a furin endopeptidase. Expressed during early developing mesenchymal cells that give rise to skeletal muscle, bones and visceral organs. Not expressed in adult normal muscle but expressed in regenerating muscle.

It localises to the membrane. Involved in skeletal muscle regeneration, specifically at the onset of cell fusion. Also involved in macrophage-derived giant cells (MGC) and osteoclast formation from mononuclear precursors. In Mus musculus (Mouse), this protein is Disintegrin and metalloproteinase domain-containing protein 12 (Adam12).